Here is an 80-residue protein sequence, read N- to C-terminus: Defensin-like protein 44 (80 aa).

Positions Met-1–Ala-27 are cleaved as a signal peptide. Disulfide bonds link Cys-40–Cys-79, Cys-44–Cys-67, Cys-53–Cys-77, and Cys-57–Cys-78.

Belongs to the DEFL family.

The protein localises to the secreted. The chain is Defensin-like protein 44 from Arabidopsis thaliana (Mouse-ear cress).